The following is a 577-amino-acid chain: Phosphoethanolamine transferase CptA (577 aa).

5 consecutive transmembrane segments (helical) span residues 17-37, 45-65, 69-89, 119-139, and 154-174; these read LGWA…IIYL, GLRD…LFPG, VIAA…LSYY, YFSL…ILLW, and LVSF…NTFI.

It belongs to the phosphoethanolamine transferase family. EptC/CptA subfamily.

Its subcellular location is the cell inner membrane. Its pathway is bacterial outer membrane biogenesis; LPS core biosynthesis. Functionally, catalyzes the addition of a phosphoethanolamine moiety to the outer membrane lipopolysaccharide core. The chain is Phosphoethanolamine transferase CptA (cptA) from Salmonella typhimurium (strain LT2 / SGSC1412 / ATCC 700720).